The following is a 131-amino-acid chain: MSSGGKGKASSETKSSSRSSKAGLQFPVGRIHRLLKKGNYAQRIGSGAPVYLAAVLEYLAAEILELAGNAARDNKKSRIVPRHLQLAVRNDEELNKLLGSVVISQGGVLPHIMAELLPVKTKGKAKASQEV.

The tract at residues 1-24 is disordered; sequence MSSGGKGKASSETKSSSRSSKAGL. Residues Lys-6 and Lys-8 each carry the N6-acetyllysine modification. Low complexity predominate over residues 8 to 23; that stretch reads KASSETKSSSRSSKAG. Residue Gln-105 is modified to N5-methylglutamine. Ser-128 carries the phosphoserine modification. The short motif at 128–129 is the [ST]-Q motif element; that stretch reads SQ.

It belongs to the histone H2A family. In terms of assembly, the nucleosome is a histone octamer containing two molecules each of H2A, H2B, H3 and H4 assembled in one H3-H4 heterotetramer and two H2A-H2B heterodimers. The octamer wraps approximately 147 bp of DNA. Post-translationally, phosphorylated to form H2AS128ph (gamma-H2A) in response to DNA double-strand breaks (DSBs) generated by exogenous genotoxic agents and by stalled replication forks. Phosphorylation is dependent on the DNA damage checkpoint kinases MEC1/ATR and TEL1/ATM, spreads on either side of a detected DSB site and may mark the surrounding chromatin for recruitment of proteins required for DNA damage signaling and repair. Gamma-H2A is removed from the DNA prior to the strand invasion-primer extension step of the repair process and subsequently dephosphorylated. Dephosphorylation is necessary for efficient recovery from the DNA damage checkpoint. In terms of processing, acetylated by ESA1 to form H2AK4ac and H2AK7ac.

The protein resides in the nucleus. The protein localises to the chromosome. Core component of nucleosome which plays a central role in DNA double strand break (DSB) repair. Nucleosomes wrap and compact DNA into chromatin, limiting DNA accessibility to the cellular machineries which require DNA as a template. Histones thereby play a central role in transcription regulation, DNA repair, DNA replication and chromosomal stability. DNA accessibility is regulated via a complex set of post-translational modifications of histones, also called histone code, and nucleosome remodeling. The protein is Histone H2A (HTA1) of Cryptococcus neoformans var. neoformans serotype D (strain B-3501A) (Filobasidiella neoformans).